The primary structure comprises 228 residues: Urease accessory protein UreF (228 aa).

It belongs to the UreF family. As to quaternary structure, ureD, UreF and UreG form a complex that acts as a GTP-hydrolysis-dependent molecular chaperone, activating the urease apoprotein by helping to assemble the nickel containing metallocenter of UreC. The UreE protein probably delivers the nickel.

It is found in the cytoplasm. Required for maturation of urease via the functional incorporation of the urease nickel metallocenter. This chain is Urease accessory protein UreF, found in Yersinia pestis bv. Antiqua (strain Antiqua).